A 541-amino-acid chain; its full sequence is Chaperonin GroEL (541 aa).

Residues 29–32, 86–90, Gly413, and Asp495 contribute to the ATP site; these read TLGP and DGTTT.

Forms a cylinder of 14 subunits composed of two heptameric rings stacked back-to-back. Interacts with the co-chaperonin GroES.

The protein resides in the cytoplasm. The catalysed reaction is ATP + H2O + a folded polypeptide = ADP + phosphate + an unfolded polypeptide.. In terms of biological role, together with its co-chaperonin GroES, plays an essential role in assisting protein folding. The GroEL-GroES system forms a nano-cage that allows encapsulation of the non-native substrate proteins and provides a physical environment optimized to promote and accelerate protein folding. This Thermoanaerobacter brockii (Thermoanaerobium brockii) protein is Chaperonin GroEL.